Reading from the N-terminus, the 451-residue chain is MTKRKLHNNWIIVTTMITFVTIFLFCLIIIFFLKDTLHNSELDDAERSSSDINNLFHSKPVKDISALDLNASLGNFQEIIIYDEHNNKLFETSNDNTVRVEPGYEHRYFDRVIKKRYKGIDYLIIKEPITTQDFKGYSLLIHSLENYDNIVKSLYIIALAFGVIATIITATISYVFSTQITKPLVSLSNKMIEIRRDGFQNKLQLNTNYEEIDNLANTFNEMMSQIEESFNQQRQFVEDASHELRTPLQIIQGHLNLIQRWGKKDPAVLEESLNISIEEMNRIIKLVEELLELTKGDVNDISSEAQTVHINDEIRSRIHSLKQLHPDYQFDTDLTSKNLEIKMKPHQFEQLFLIFIDNAIKYDVKNKKIKVKTRLKNKQKIIEITDHGIGIPEEDQDFIFDRFYRVDKSRSRSQGGNGLGLSIAQKIIQLNGGSIKIKSEINKGTTFKIIF.

A run of 2 helical transmembrane segments spans residues 11–31 (IIVT…IIIF) and 156–176 (IIAL…SYVF). The region spanning 178-231 (TQITKPLVSLSNKMIEIRRDGFQNKLQLNTNYEEIDNLANTFNEMMSQIEESFN) is the HAMP domain. The Histidine kinase domain occupies 239–451 (DASHELRTPL…NKGTTFKIIF (213 aa)). At H242 the chain carries Phosphohistidine; by autocatalysis.

In terms of processing, autophosphorylated.

It is found in the cell membrane. The catalysed reaction is ATP + protein L-histidine = ADP + protein N-phospho-L-histidine.. Member of the two-component regulatory system ArlS/ArlR involved in the regulation of adhesion, autolysis, multidrug resistance and virulence. ArlS probably functions as a sensor protein kinase which is autophosphorylated at a histidine residue and transfers its phosphate group to ArlR. This is Signal transduction histidine-protein kinase ArlS (arlS) from Staphylococcus aureus (strain bovine RF122 / ET3-1).